The sequence spans 843 residues: Protein P (843 aa).

A terminal protein domain (TP) region spans residues 1 to 177; the sequence is MPLSYQHFRK…FCGSPYSWEQ (177 aa). Residues 178 to 346 are spacer; that stretch reads ELQHGRLVFQ…YCLSHIVNLL (169 aa). Disordered regions lie at residues 218 to 243 and 290 to 316; these read LKQS…SGSI and STSK…RSQS. Residues 290–299 show a composition bias toward polar residues; it reads STSKRQSSSG. The segment at 347–690 is polymerase/reverse transcriptase domain (RT); it reads EDWGPCTEHG…YLHLYPVARQ (344 aa). Residues 357-600 form the Reverse transcriptase domain; that stretch reads EHNIRIPRTP…YSLNFMGYVI (244 aa). Asp-429, Asp-551, and Asp-552 together coordinate Mg(2+).

It belongs to the hepadnaviridae P protein family.

The enzyme catalyses DNA(n) + a 2'-deoxyribonucleoside 5'-triphosphate = DNA(n+1) + diphosphate. It catalyses the reaction Endonucleolytic cleavage to 5'-phosphomonoester.. With respect to regulation, activated by host HSP70 and HSP40 in vitro to be able to bind the epsilon loop of the pgRNA. Because deletion of the RNase H region renders the protein partly chaperone-independent, the chaperones may be needed indirectly to relieve occlusion of the RNA-binding site by this domain. Inhibited by several reverse-transcriptase inhibitors: Lamivudine, Adefovir and Entecavir. Its function is as follows. Multifunctional enzyme that converts the viral RNA genome into dsDNA in viral cytoplasmic capsids. This enzyme displays a DNA polymerase activity that can copy either DNA or RNA templates, and a ribonuclease H (RNase H) activity that cleaves the RNA strand of RNA-DNA heteroduplexes in a partially processive 3'- to 5'-endonucleasic mode. Neo-synthesized pregenomic RNA (pgRNA) are encapsidated together with the P protein, and reverse-transcribed inside the nucleocapsid. Initiation of reverse-transcription occurs first by binding the epsilon loop on the pgRNA genome, and is initiated by protein priming, thereby the 5'-end of (-)DNA is covalently linked to P protein. Partial (+)DNA is synthesized from the (-)DNA template and generates the relaxed circular DNA (RC-DNA) genome. After budding and infection, the RC-DNA migrates in the nucleus, and is converted into a plasmid-like covalently closed circular DNA (cccDNA). The activity of P protein does not seem to be necessary for cccDNA generation, and is presumably released from (+)DNA by host nuclear DNA repair machinery. This chain is Protein P, found in Homo sapiens (Human).